We begin with the raw amino-acid sequence, 247 residues long: Probable transcriptional regulatory protein GM21_0933 (247 aa).

Belongs to the TACO1 family.

It localises to the cytoplasm. The protein is Probable transcriptional regulatory protein GM21_0933 of Geobacter sp. (strain M21).